The following is a 147-amino-acid chain: 3-hydroxyacyl-[acyl-carrier-protein] dehydratase FabZ (147 aa).

His48 is an active-site residue.

This sequence belongs to the thioester dehydratase family. FabZ subfamily.

It localises to the cytoplasm. It carries out the reaction a (3R)-hydroxyacyl-[ACP] = a (2E)-enoyl-[ACP] + H2O. Involved in unsaturated fatty acids biosynthesis. Catalyzes the dehydration of short chain beta-hydroxyacyl-ACPs and long chain saturated and unsaturated beta-hydroxyacyl-ACPs. The sequence is that of 3-hydroxyacyl-[acyl-carrier-protein] dehydratase FabZ from Aliarcobacter butzleri (strain RM4018) (Arcobacter butzleri).